The primary structure comprises 156 residues: Low molecular weight phosphotyrosine protein phosphatase (156 aa).

Cys-11 functions as the Nucleophile in the catalytic mechanism. Arg-17 is a catalytic residue. The active-site Proton donor is Asp-128.

Belongs to the low molecular weight phosphotyrosine protein phosphatase family.

The protein resides in the cytoplasm. The catalysed reaction is O-phospho-L-tyrosyl-[protein] + H2O = L-tyrosyl-[protein] + phosphate. It catalyses the reaction a phosphate monoester + H2O = an alcohol + phosphate. May contribute to dephosphorylation of 'Tyr-15' of cdc2. The sequence is that of Low molecular weight phosphotyrosine protein phosphatase (stp1) from Schizosaccharomyces pombe (strain 972 / ATCC 24843) (Fission yeast).